Reading from the N-terminus, the 299-residue chain is MDANSAHDTARILIEALPYIQRFAGTTVVIKYGGNAMENEELKNSFARDVVMMKQVGIHPVIVHGGGPQIGELLERLGKESKFVQGMRVTDRETMDVVQMVLGGLVNKDIVNLIQHNGGQAIGLTGKDGRLIKARKMVLKASDADSPALQASEIIDIGHVGEVQGIDTRIIDLLAGSDFIPVIAPIGVDDNGASYNINADLVAGKVAEVLRAEKLILLTNVPGLKDKQGQILTGLTTERVNSLIKDGTIYGGMLPKIGCALEAVQNGVHTAHIIDGRVSHAVLLEILTDKGIGTLISKD.

Substrate is bound by residues 66 to 67, Arg88, and Asn196; that span reads GG.

Belongs to the acetylglutamate kinase family. ArgB subfamily.

It localises to the cytoplasm. The catalysed reaction is N-acetyl-L-glutamate + ATP = N-acetyl-L-glutamyl 5-phosphate + ADP. The protein operates within amino-acid biosynthesis; L-arginine biosynthesis; N(2)-acetyl-L-ornithine from L-glutamate: step 2/4. Functionally, catalyzes the ATP-dependent phosphorylation of N-acetyl-L-glutamate. The polypeptide is Acetylglutamate kinase (Alcanivorax borkumensis (strain ATCC 700651 / DSM 11573 / NCIMB 13689 / SK2)).